We begin with the raw amino-acid sequence, 155 residues long: Molybdopterin synthase catalytic subunit (155 aa).

Substrate contacts are provided by residues 109–110, K125, and 132–134; these read HR and KKE.

The protein belongs to the MoaE family. MOCS2B subfamily. In terms of assembly, heterotetramer; composed of 2 small (MOCS2A) and 2 large (MOCS2B) subunits.

Its subcellular location is the cytoplasm. The protein localises to the cytosol. The enzyme catalyses 2 [molybdopterin-synthase sulfur-carrier protein]-C-terminal-Gly-aminoethanethioate + cyclic pyranopterin phosphate + H2O = molybdopterin + 2 [molybdopterin-synthase sulfur-carrier protein]-C-terminal Gly-Gly + 2 H(+). Its pathway is cofactor biosynthesis; molybdopterin biosynthesis. Catalytic subunit of the molybdopterin synthase complex, a complex that catalyzes the conversion of precursor Z into molybdopterin. Acts by mediating the incorporation of 2 sulfur atoms from thiocarboxylated MOCS2A into precursor Z to generate a dithiolene group. In Taeniopygia guttata (Zebra finch), this protein is Molybdopterin synthase catalytic subunit.